Reading from the N-terminus, the 186-residue chain is Type 1 phosphatases regulator ypi-1 (186 aa).

A compositionally biased stretch (polar residues) spans 1-32; it reads MTSVAQRQAQPAQPSTSQTAAPTRTQTETSSP. Residues 1-186 form a disordered region; it reads MTSVAQRQAQ…SETQGPGGSK (186 aa). Low complexity predominate over residues 82–94; the sequence is DSSSSSDSSSSSD. Positions 122–137 are enriched in basic and acidic residues; it reads HDHDHDGREGGCNHDH. Over residues 138–151 the composition is skewed to basic residues; the sequence is GRGRKHGNKGKKTE.

Belongs to the YPI1 family.

It localises to the nucleus. In terms of biological role, regulator of type 1 phosphatases which maintains protein phosphatase activity under strict control. This chain is Type 1 phosphatases regulator ypi-1 (ypi-1), found in Neurospora crassa (strain ATCC 24698 / 74-OR23-1A / CBS 708.71 / DSM 1257 / FGSC 987).